The chain runs to 206 residues: Ribosomal RNA small subunit methyltransferase G (206 aa).

Residues G74, L79, 125-126 (VE), and R140 each bind S-adenosyl-L-methionine.

Belongs to the methyltransferase superfamily. RNA methyltransferase RsmG family.

The protein resides in the cytoplasm. It catalyses the reaction guanosine(527) in 16S rRNA + S-adenosyl-L-methionine = N(7)-methylguanosine(527) in 16S rRNA + S-adenosyl-L-homocysteine. In terms of biological role, specifically methylates the N7 position of guanine in position 527 of 16S rRNA. The protein is Ribosomal RNA small subunit methyltransferase G of Shewanella sp. (strain MR-4).